The following is a 186-amino-acid chain: Trafficking protein particle complex subunit 3 (186 aa).

The protein belongs to the TRAPP small subunits family. BET3 subfamily. As to quaternary structure, homodimer. Part of the multisubunit TRAPP (transport protein particle) complex.

The protein resides in the golgi apparatus. Its subcellular location is the cis-Golgi network. It is found in the endoplasmic reticulum. In terms of biological role, may play a role in vesicular transport from endoplasmic reticulum to Golgi. This chain is Trafficking protein particle complex subunit 3 (trappc3), found in Dictyostelium discoideum (Social amoeba).